The chain runs to 228 residues: Isonitrile hydratase (228 aa).

The active site involves Cys-101.

As to quaternary structure, homodimer.

The enzyme catalyses N-cyclohexylformamide = cyclohexyl isocyanide + H2O. Its activity is regulated as follows. Sensitive to thiol reagents and oxidizing reagents, but is not influenced by chelators or reducing reagents. Catalyzes the hydration of cyclohexyl isocyanide to N-cyclohexylformamide. Acts on various isonitriles, but not on nitriles or amides. Probably involved in detoxification. The polypeptide is Isonitrile hydratase (inhA) (Pseudomonas putida (Arthrobacter siderocapsulatus)).